Consider the following 582-residue polypeptide: Aspartate--tRNA(Asp/Asn) ligase (582 aa).

Glutamate 177 is an L-aspartate binding site. The interval 201–204 is aspartate; it reads QLFK. Arginine 223 lines the L-aspartate pocket. ATP contacts are provided by residues 223 to 225 and glutamine 232; that span reads RDE. An L-aspartate-binding site is contributed by histidine 447. Residue glutamate 481 participates in ATP binding. L-aspartate is bound at residue arginine 488. An ATP-binding site is contributed by 533–536; the sequence is GLDR.

This sequence belongs to the class-II aminoacyl-tRNA synthetase family. Type 1 subfamily. Homodimer.

It is found in the cytoplasm. The enzyme catalyses tRNA(Asx) + L-aspartate + ATP = L-aspartyl-tRNA(Asx) + AMP + diphosphate. Aspartyl-tRNA synthetase with relaxed tRNA specificity since it is able to aspartylate not only its cognate tRNA(Asp) but also tRNA(Asn). Reaction proceeds in two steps: L-aspartate is first activated by ATP to form Asp-AMP and then transferred to the acceptor end of tRNA(Asp/Asn). The polypeptide is Aspartate--tRNA(Asp/Asn) ligase (Chlamydia muridarum (strain MoPn / Nigg)).